Consider the following 116-residue polypeptide: MLSCRLQCALAALSIVLALGGVTGAPSDPRLRQFLQKSLAAAAGKQELAKYFLAELLSEPNQTENDALEPEDLSQAAEQDEMRLELQRSANSNPAMAPRERKAGCKNFFWKTFTSC.

Positions 1-24 are cleaved as a signal peptide; sequence MLSCRLQCALAALSIVLALGGVTG. A propeptide spanning residues 25 to 88 is cleaved from the precursor; that stretch reads APSDPRLRQF…QDEMRLELQR (64 aa). Alanine 43 is subject to Alanine amide. The interval 62–99 is disordered; the sequence is QTENDALEPEDLSQAAEQDEMRLELQRSANSNPAMAPR. Residues cysteine 105 and cysteine 116 are joined by a disulfide bond.

It belongs to the somatostatin family. Post-translationally, C-terminal amidation of the neuronostatin peptide is required for its biological activity, including for the regulation of mean arterial pressure. Expressed in the pancreas and the spleen (at protein level).

The protein localises to the secreted. Functionally, inhibits the secretion of pituitary hormones, including that of growth hormone/somatotropin (GH1), PRL, ACTH, luteinizing hormone (LH) and TSH. Also impairs ghrelin- and GnRH-stimulated secretion of GH1 and LH; the inhibition of ghrelin-stimulated secretion of GH1 can be further increased by neuronostatin. May enhance low-glucose-induced glucagon release by pancreatic alpha cells. This effect may be mediated by binding to GPR107 and PKA activation. May regulate cardiac contractile function. May compromise cardiomyocyte viability. In the central nervous system, may impair memory retention and may affect hippocampal excitability. May also have anxiolytic and anorexigenic effects. May play a role in arterial pressure regulation. May inhibit basal, but not ghrelin- or GnRH-stimulated secretion of GH1 or LH, but does not affect the release of other pituitary hormones, including PRL, ACTH, FSH or TSH. Potentiates inhibitory action of somatostatin on ghrelin-stimulated secretion of GH1, but not that on GnRH-stimulated secretion of LH. This is Somatostatin (SST) from Sus scrofa (Pig).